Reading from the N-terminus, the 1264-residue chain is MSSQNNNKQGGQDINNKKDSDDIKPSVSKEDLINSLKNDELNKNTTMDQNDMKKNENMNIKKNEVLNNSNNVEDGDNENSKFMNKSKEGLNNINGEKNDDNNSIVKVEESPKSIGYNYYASESIENLCKEFGLESINTGLNSEQVKINRDKYGENFIEKDEVVPVWLIFLSQYCSPVVLLLLVAAVASLALNEVVEGVAIISIVTLNACLATYMEKSSGDAIGKLAEMASPQCTVLRNGQKVVIPSREVVVGDVVLINTGDSISADLRLFDVIELKTNESLLTGESEDIKKTIVADNLSTPFATNLCFATTSVTSGSGKGIVISTGLDTQVGKIASQLKKSSKGSKLTPLQVALNKLGGLIGLIAIIVLVVIISLAVIIKYRDPAHADKDPTFVIIIIGVGFAVSSIPEGLPMVVTITLSAGAKDMVKKNANVRKLPAVETLGCCSVICSDKTGTLTEGKMTAINAVTICKNSSLSDENNKLTKTFDFYPTKGFEPCGGLFDSNELTSEKKKEIVIAKNQNTSYDKVLYNYGNPSNKSVIVDKTRSLMFAAYLNSYDTTLSRDPKTLKWGIHGNMSEGPIVVAAAKVGYSFINNPNHKSYLDNFQRLDDLEVTFNSSRKMKITFYKLKTVNVFENVYLDKPGKVYTHVALIKGAPDRLLDRSTHLLEETSMKKVQVSWNSTITQEERNVLIKKNLELSQKALRVLSICIKPLTDQNIEELKKLEDADERLKYVNYDENGGFIPMGYVASFDPPRPGVKEAIQTCREAQVKVIMITGDQKPTAVAIGKLIGLIEEKSEQVEDINSLAIECSELHINKNPNEPILPNDQLDEFTDKILIYSRAQPEDKITIVQSLKRKGYLVAMTGDGVNDAPALKAADIGVAMGINGTEVAKGASEMILIDDNFCTVVSAIDVGRTIFSNIQKFVCFLLGTNIGEIIYLSVAIVAQMPFPLEALQILFLNLMTDGCPAVALSREPPNDDNMKTPPRPKKQPIMTKRWWFYGILPHTIFEALCVLLSLAFSLYICTGFYNLNGIHNLCKTVNLVDVNDANVYHEYKYFCSSYEYRISTDYVGWVTNVSFWDPQNNEAVNFWGAAKGKVENINPLSDIVHPELRLRMQDGCSGDLTLDENGWCRPKDNKTSDGYNDELEGILKKGFEDVTAKGSKRGRTMAFISAVWCEMLRAYTVRSWEPFYKVFNRNMWMHLACSISATLTFLSTCIPGITSILNTTCLLWWQYLLAIFWALLNLFLDEIVPKVIYRRKYMTIKN.

Residues 1-12 are compositionally biased toward polar residues; sequence MSSQNNNKQGGQ. The interval 1–102 is disordered; it reads MSSQNNNKQG…INGEKNDDNN (102 aa). Basic and acidic residues-rich tracts occupy residues 15-42 and 50-64; these read NNKK…DELN and NDMK…KKNE. Helical transmembrane passes span 165 to 185, 186 to 206, 359 to 379, 393 to 413, 923 to 943, 1006 to 1026, 1203 to 1223, and 1226 to 1246; these read VWLI…LVAA, VASL…IVTL, GLIG…AVII, FVII…GLPM, FVCF…VAIV, IFEA…CTGF, CSIS…TSIL, and TCLL…NLFL.

The protein belongs to the cation transport ATPase (P-type) (TC 3.A.3) family.

It localises to the cell membrane. It catalyses the reaction Na(+)(in) + ATP + H2O = Na(+)(out) + ADP + phosphate + H(+). Its activity is regulated as follows. Inhibited by cipargamin and other spiroindolone compounds. Inhibited by 4-cyano-3-methylisoquinoline derivatives MB14 and MB10 but not RK18. Inhibited by (+)-SJ733, a dihydroisoquinolone compound. Sodium-exporting ATPase. Required for the extrusion of Na(+) from the intraerythrocytic parasites to maintain a low cytosolic concentration of Na(+). This Plasmodium falciparum (isolate 3D7) protein is P-type sodium-transporting ATPase4.